The primary structure comprises 939 residues: Protein translocase subunit SecA 1 (939 aa).

Residues Gln-85, 103-107, and Asp-504 contribute to the ATP site; that span reads GEGKT. The tract at residues 848-939 is disordered; sequence EVPVEDEKPS…QSKGGRRRKK (92 aa). Basic and acidic residues-rich tracts occupy residues 852–863, 872–889, and 914–925; these read EDEKPSLEKEDA, PEIRAKGLEAPQRPDRLH, and PVRSEADGLTRA. Residues 926 to 939 show a composition bias toward basic residues; it reads ERRKQSKGGRRRKK.

The protein belongs to the SecA family. Monomer and homodimer. Part of the essential Sec protein translocation apparatus which comprises SecA, SecYEG and auxiliary proteins SecDF. Other proteins may also be involved.

It localises to the cell membrane. The protein resides in the cytoplasm. The enzyme catalyses ATP + H2O + cellular proteinSide 1 = ADP + phosphate + cellular proteinSide 2.. Part of the Sec protein translocase complex. Interacts with the SecYEG preprotein conducting channel. Has a central role in coupling the hydrolysis of ATP to the transfer of proteins into and across the cell membrane, serving as an ATP-driven molecular motor driving the stepwise translocation of polypeptide chains across the membrane. This chain is Protein translocase subunit SecA 1, found in Streptomyces avermitilis (strain ATCC 31267 / DSM 46492 / JCM 5070 / NBRC 14893 / NCIMB 12804 / NRRL 8165 / MA-4680).